The chain runs to 231 residues: Lipoprotein-releasing system ATP-binding protein LolD (231 aa).

The ABC transporter domain occupies 6-231; sequence LKCQSVHKVY…VLAKVAPNSL (226 aa). Residue 42–49 coordinates ATP; the sequence is GASGSGKS.

It belongs to the ABC transporter superfamily. Lipoprotein translocase (TC 3.A.1.125) family. As to quaternary structure, the complex is composed of two ATP-binding proteins (LolD) and two transmembrane proteins (LolC and LolE).

The protein localises to the cell inner membrane. In terms of biological role, part of the ABC transporter complex LolCDE involved in the translocation of mature outer membrane-directed lipoproteins, from the inner membrane to the periplasmic chaperone, LolA. Responsible for the formation of the LolA-lipoprotein complex in an ATP-dependent manner. The sequence is that of Lipoprotein-releasing system ATP-binding protein LolD from Hahella chejuensis (strain KCTC 2396).